The chain runs to 568 residues: Putative F-box protein At5g39480 (568 aa).

In terms of domain architecture, F-box spans 9–55 (ACLLLTLPEDVFAVISRFLSPSDICNLILCGKSLPALVDTEKMWLVQ). The tract at residues 315 to 337 (TNVLGESSSSKNTTPSQSEIRVS) is disordered. Over residues 321-332 (SSSSKNTTPSQS) the composition is skewed to low complexity.

The chain is Putative F-box protein At5g39480 from Arabidopsis thaliana (Mouse-ear cress).